A 265-amino-acid chain; its full sequence is Mlc titration factor A (265 aa).

Zn(2+) is bound by residues His-111, His-148, His-152, and Glu-211.

The protein belongs to the MtfA family. As to quaternary structure, interacts with Mlc. Requires Zn(2+) as cofactor.

It is found in the cytoplasm. Involved in the modulation of the activity of the glucose-phosphotransferase system (glucose-PTS). Interacts with the transcriptional repressor Mlc, preventing its interaction with DNA and leading to the modulation of expression of genes regulated by Mlc, including ptsG, which encodes the PTS system glucose-specific EIICB component. In terms of biological role, shows zinc-dependent metallopeptidase activity. This Cronobacter sakazakii (strain ATCC BAA-894) (Enterobacter sakazakii) protein is Mlc titration factor A.